The following is a 127-amino-acid chain: NHP2-like protein 1 homolog (127 aa).

This sequence belongs to the eukaryotic ribosomal protein eL8 family.

The protein resides in the nucleus. It is found in the nucleolus. Functionally, binds to the 5'-stem-loop of U4 snRNA and may play a role in the late stage of spliceosome assembly. The protein undergoes a conformational change upon RNA-binding. The chain is NHP2-like protein 1 homolog (hoip) from Drosophila melanogaster (Fruit fly).